The sequence spans 440 residues: Guanine/hypoxanthine permease PbuG (440 aa).

The next 13 membrane-spanning stretches (helical) occupy residues 18–38, 57–77, 81–101, 107–127, 142–162, 175–195, 201–221, 251–271, 291–311, 327–347, 354–374, 388–408, and 419–439; these read IIGG…NPIT, AVFT…GLIA, IAIA…VLGM, AALS…LTGF, AVGA…SGII, IHSG…ILMV, GVFI…LVPV, MLIV…GTLV, ALLA…STTT, GFAA…SPLL, VTAP…GKIA, MIMM…FIFY, and KEVH…FIFL.

The protein belongs to the nucleobase:cation symporter-2 (NCS2) (TC 2.A.40) family. Azg-like subfamily.

Its subcellular location is the cell membrane. In terms of biological role, involved in the uptake of the purine bases hypoxanthine and guanine. This Bacillus subtilis (strain 168) protein is Guanine/hypoxanthine permease PbuG (pbuG).